A 520-amino-acid chain; its full sequence is Putative transporter svop-1 (520 aa).

Residues 1–85 are Cytoplasmic-facing; sequence MGDKAILTEV…LGFGRFQLKL (85 aa). Residues 86–106 traverse the membrane as a helical segment; sequence SILTGMAWMADAMEMMLLSLI. At 107–120 the chain is on the extracellular side; that stretch reads SPALACEWGISSVQ. A helical transmembrane segment spans residues 121 to 141; sequence QALVTTCVFSGMMLSSTFWGK. The Cytoplasmic segment spans residues 142–157; that stretch reads ICDRFGRRKGLTFSTL. The helical transmembrane segment at 158-178 threads the bilayer; that stretch reads VACIMGVISGMSPHFYVLLFF. Position 179 (Arg179) is a topological domain, extracellular. Residues 180–200 form a helical membrane-spanning segment; the sequence is GLTGFGIGGVPQSVTLYAEFL. The Cytoplasmic segment spans residues 201-208; it reads PTAQRAKC. Residues 209–229 form a helical membrane-spanning segment; the sequence is VVLIESFWAIGAVFEALLAYF. The Extracellular portion of the chain corresponds to 230-237; that stretch reads VMESFGWR. A helical membrane pass occupies residues 238 to 258; the sequence is ALMFLSSLPLGIFAVASFWLP. Residues 259–319 lie on the Cytoplasmic side of the membrane; it reads ESARFDMASG…LLSPDLRKTT (61 aa). The chain crosses the membrane as a helical span at residues 320 to 340; the sequence is ILLWCIWAITAFSYYGMVLFT. Residues 341-372 are Extracellular-facing; sequence TVLFQSHDECHGGLFSNGTQMEVCQPLTRSDY. The chain crosses the membrane as a helical span at residues 373-393; it reads FDLLSTTLAEFPGLIITVLII. Residues 394–410 are Cytoplasmic-facing; sequence EWFGRKKTMALEYAVFA. The chain crosses the membrane as a helical span at residues 411 to 431; it reads IFTFLLYFCLDRFTVTVLIFV. The Extracellular segment spans residues 432–434; that stretch reads ARA. Residues 435–455 form a helical membrane-spanning segment; the sequence is FISGAFQCAYVYTPEVYPTTL. Residues 456-461 are Cytoplasmic-facing; that stretch reads RAVGLG. A helical membrane pass occupies residues 462 to 487; it reads TCSAMARIGAIVTPFIAQVASEKSLS. The Extracellular portion of the chain corresponds to 488 to 489; that stretch reads LP. Residues 490–509 form a helical membrane-spanning segment; the sequence is IGIYGTAAILGLIASLSLPI. The Cytoplasmic portion of the chain corresponds to 510–520; that stretch reads ETKGRQMMDSH.

It belongs to the major facilitator superfamily.

The protein resides in the membrane. This chain is Putative transporter svop-1, found in Caenorhabditis elegans.